The following is a 464-amino-acid chain: Siroheme synthase (464 aa).

The interval 1–203 (MEYLPLFHNL…GQGAEAERLL (203 aa)) is precorrin-2 dehydrogenase /sirohydrochlorin ferrochelatase. NAD(+) contacts are provided by residues 22–23 (EI) and 43–44 (PE). Ser128 bears the Phosphoserine mark. Residues 216-464 (GEVYLVGAGP…AWFEGAQSEV (249 aa)) are uroporphyrinogen-III C-methyltransferase. Pro225 is an S-adenosyl-L-methionine binding site. Asp248 acts as the Proton acceptor in catalysis. Lys270 acts as the Proton donor in catalysis. Residues 301–303 (GGD), Ile306, 331–332 (TA), Met383, and Gly412 contribute to the S-adenosyl-L-methionine site.

This sequence in the N-terminal section; belongs to the precorrin-2 dehydrogenase / sirohydrochlorin ferrochelatase family. It in the C-terminal section; belongs to the precorrin methyltransferase family.

It catalyses the reaction uroporphyrinogen III + 2 S-adenosyl-L-methionine = precorrin-2 + 2 S-adenosyl-L-homocysteine + H(+). The catalysed reaction is precorrin-2 + NAD(+) = sirohydrochlorin + NADH + 2 H(+). The enzyme catalyses siroheme + 2 H(+) = sirohydrochlorin + Fe(2+). It participates in cofactor biosynthesis; adenosylcobalamin biosynthesis; precorrin-2 from uroporphyrinogen III: step 1/1. The protein operates within cofactor biosynthesis; adenosylcobalamin biosynthesis; sirohydrochlorin from precorrin-2: step 1/1. It functions in the pathway porphyrin-containing compound metabolism; siroheme biosynthesis; precorrin-2 from uroporphyrinogen III: step 1/1. Its pathway is porphyrin-containing compound metabolism; siroheme biosynthesis; siroheme from sirohydrochlorin: step 1/1. It participates in porphyrin-containing compound metabolism; siroheme biosynthesis; sirohydrochlorin from precorrin-2: step 1/1. Its function is as follows. Multifunctional enzyme that catalyzes the SAM-dependent methylations of uroporphyrinogen III at position C-2 and C-7 to form precorrin-2 via precorrin-1. Then it catalyzes the NAD-dependent ring dehydrogenation of precorrin-2 to yield sirohydrochlorin. Finally, it catalyzes the ferrochelation of sirohydrochlorin to yield siroheme. The chain is Siroheme synthase from Pseudomonas fluorescens (strain ATCC BAA-477 / NRRL B-23932 / Pf-5).